A 323-amino-acid chain; its full sequence is V-type ATP synthase subunit C (323 aa).

It belongs to the V-ATPase V0D/AC39 subunit family.

Functionally, produces ATP from ADP in the presence of a proton gradient across the membrane. In Thermus thermophilus (strain ATCC 27634 / DSM 579 / HB8), this protein is V-type ATP synthase subunit C (atpC).